A 299-amino-acid polypeptide reads, in one-letter code: Pyridoxal 5'-phosphate synthase subunit PdxS (299 aa).

Asp24 provides a ligand contact to D-ribose 5-phosphate. The Schiff-base intermediate with D-ribose 5-phosphate role is filled by Lys81. Gly153 contributes to the D-ribose 5-phosphate binding site. Residue Arg165 coordinates D-glyceraldehyde 3-phosphate. D-ribose 5-phosphate contacts are provided by residues Gly219 and 240–241; that span reads GS.

Belongs to the PdxS/SNZ family. In terms of assembly, in the presence of PdxT, forms a dodecamer of heterodimers.

It catalyses the reaction aldehydo-D-ribose 5-phosphate + D-glyceraldehyde 3-phosphate + L-glutamine = pyridoxal 5'-phosphate + L-glutamate + phosphate + 3 H2O + H(+). It participates in cofactor biosynthesis; pyridoxal 5'-phosphate biosynthesis. In terms of biological role, catalyzes the formation of pyridoxal 5'-phosphate from ribose 5-phosphate (RBP), glyceraldehyde 3-phosphate (G3P) and ammonia. The ammonia is provided by the PdxT subunit. Can also use ribulose 5-phosphate and dihydroxyacetone phosphate as substrates, resulting from enzyme-catalyzed isomerization of RBP and G3P, respectively. The protein is Pyridoxal 5'-phosphate synthase subunit PdxS of Methanococcus maripaludis (strain C5 / ATCC BAA-1333).